The primary structure comprises 188 residues: Elongation factor P-like protein (188 aa).

Belongs to the elongation factor P family.

This is Elongation factor P-like protein from Vibrio vulnificus (strain CMCP6).